The following is a 493-amino-acid chain: Isoniazid-induced protein IniC (493 aa).

This chain is Isoniazid-induced protein IniC (iniC), found in Mycobacterium tuberculosis (strain CDC 1551 / Oshkosh).